The following is a 379-amino-acid chain: NuA4 complex subunit EAF3 homolog (379 aa).

The Tudor-knot domain maps to 6–61; the sequence is EENEKVLVHHQNRIYEAKIIKVDPKTSKSDKKKPLYFIHYLGWKEKWNEWIEPNKI. The interval 75 to 212 is disordered; the sequence is TNIKASTTSL…KRNDSKSSHF (138 aa). Residues 78-87 are compositionally biased toward low complexity; it reads KASTTSLNNK. The segment covering 111–141 has biased composition (acidic residues); it reads ENSDEDENESELEDGGGEDADEGGEDIEDQE. Residues 165–199 show a composition bias toward low complexity; the sequence is SSSSSSSSKSNNNNNNNNNNNNNNNNNNNNNNNNN. An MRG domain is found at 214 to 377; sequence STKFIDIEIP…ASSPYLKAAS (164 aa).

As to quaternary structure, component of the NuA4 histone acetyltransferase complex.

Its subcellular location is the nucleus. Component of the NuA4 histone acetyltransferase complex which is involved in transcriptional activation of selected genes principally by acetylation of nucleosomal histone H4 and H2A. The NuA4 complex is also involved in DNA repair. Also a component of a complex which acts to repress transcription by deacetylation of nucleosomal histones. The sequence is that of NuA4 complex subunit EAF3 homolog from Dictyostelium discoideum (Social amoeba).